A 1436-amino-acid polypeptide reads, in one-letter code: MGARASVLSGGKLDAWEKIRLRPGGKKKYRLKHLVWASRELERFALNPGLLETSDGCKQIIGQLQPAIRTGSEELRSLFNTVATLYCVHERIEVKDTKEALEKMEEEQNKSKNKKAQQAAADAGNNSQVSQNYPIVQNLQGQMVHQAISPRTLNAWVKVIEEKAFSPEVIPMFSALSEGATPQDLNTMLNTVGGHQAAMQMLKETINEEAAEWDRLHPVHAGPIAPGQMREPRGSDIAGTTSTLQEQIAWMTSNPPIPVGEIYKRWIILGLNKIVRMYSPVSILDIRQGPKEPFRDYVDRFYKTLRAEQASQEVKGWMTETLLVQNANPDCKTILKALGPQATLEEMMTACQGVGGPSHKARVLAEAMSQATNSAAAVMMQRGNFKGPRKTIKCFNCGKEGHIAKNCRAPRRKGCWKCGKEGHQLKDCTERQANFLREDLAFPQGKAGELSSEQTRANSPTSRELRVWGRDNPLSETGAERQGTVSFNCPQITLWQRPLVTIKIGGQLKEALLDTGADDTVLEEMNLPGKWKPKMIGGIGGFIKVRQYDQILIEICGHKAIGTVLVGPTPVNIIGRNLLTQIGCTLNFPISPIETVPVKLKPGMDGPKVKQWPLTEEKIKALTEICTEMEKEGKISRVGPENPYNTPIFAIKKKDSTKWRKLVDFRELNKRTQDFWEVQLGIPHPAGLKKKKSVTVLDVGDAYFSVPLDKDFRKYTAFTIPSINNETPGIRYQYNVLPQGWKGSPAIFQSSMTKILEPFRKQNPEIVIYQYMDDLYVGSDLEIGQHRTKIEELREHLLRWGFTTPDKKHQKEPPFLWMGYELHPDKWTVQSIKLPEKESWTVNDIQKLVGKLNWASQIYPGIKVRQLCKLLRGTKALTEVIPLTEEAELELAENREILKEPVHGVYYDPSKDLIAEIQKQGHGQWTYQIYQEPFKNLKTGKYARMRGAHTNDVKQLAEVVQKISTESIVIWGKTPKFRLPIQKETWETWWVEYWQATWIPEWEFVNTPPLVKLWYQLEKEPIIGAETFYVDGAANRETKLGKAGYVTDRGRQKVVPFTDTTNQKTELQAINLALQDSGLEVNIVTDSQYALGIIQAQPDKSESELVSQIIEQLIKKEKVYLAWVPAHKGIGGNEQVDKLVSQGIRKVLFLDGIDKAQEEHEKYHNNWRAMASDFNLPPVVAKEIVASCDKCQLKGEAMHGQVDCSPGIWQLDCTHLEGKVILVAVHVASGYIEAEVIPAETGQETAYFILKLAGRWPVKIVHTDNGSNFTSAAVKAACWWAGIKQEFGIPYNPQSQGVVESMNKELKKIIGQVRDQAEHLKTAVQMAVFIHNFKRKGGIGGYSAGERIIDIIATDIQTKELQKQITKIQNFRVYYRDSRDPIWKGPAKLLWKGEGAVVIQDNSDIKVVPRRKVKIIRDYGKQMAGDDCVASRQDED.

Gly2 carries N-myristoyl glycine; by host lipidation. The interval Val7–Leu31 is interaction with Gp41. Residues Leu8–Arg43 are interaction with host CALM1. The tract at residues Lys12–Ile19 is interaction with host AP3D1. Residues Asp14–His33 form an interaction with membrane phosphatidylinositol 4,5-bisphosphate and RNA region. Residues Trp16–Arg22 carry the Nuclear export signal motif. The Nuclear localization signal signature appears at Lys26–Lys32. The interaction with membrane phosphatidylinositol 4,5-bisphosphate stretch occupies residues Glu73 to Ser77. Residues Glu102–Val129 form a disordered region. A compositionally biased stretch (low complexity) spans Ala116–Gln128. Tyr133 bears the Phosphotyrosine; by host mark. Residues Asn190 to Gln228 are interaction with human PPIA/CYPA and NUP153. The interval Tyr278–Leu364 is dimerization/Multimerization of capsid protein p24. CCHC-type zinc fingers lie at residues Ile392–Ala409 and Lys413–Glu430. Residues Pro490–Leu494 are dimerization of protease. The region spanning Lys509–Leu578 is the Peptidase A2 domain. The For protease activity; shared with dimeric partner role is filled by Asp514. 2 dimerization of protease regions span residues Gly538 to Lys544 and Asn577 to Pro589. The 191-residue stretch at Glu632 to Leu822 folds into the Reverse transcriptase domain. Mg(2+)-binding residues include Asp698, Asp773, and Asp774. The segment at Phe815 to His823 is RT 'primer grip'. Positions Trp986 to Trp1002 match the Tryptophan repeat motif motif. The 124-residue stretch at Ile1022–Arg1145 folds into the RNase H type-1 domain. Residues Asp1031, Glu1066, Asp1086, and Asp1137 each coordinate Mg(2+). An Integrase-type zinc finger spans residues Asp1151–Gln1192. Residues His1160, His1164, Cys1188, and Cys1191 each contribute to the Zn(2+) site. The region spanning Val1202–Ile1352 is the Integrase catalytic domain. The Mg(2+) site is built by Asp1212, Asp1264, and Glu1300. The integrase-type DNA-binding region spans Phe1371–Asp1418.

As to quaternary structure, homotrimer; further assembles as hexamers of trimers. Interacts with gp41 (via C-terminus). Interacts with host CALM1; this interaction induces a conformational change in the Matrix protein, triggering exposure of the myristate group. Interacts with host AP3D1; this interaction allows the polyprotein trafficking to multivesicular bodies during virus assembly. Part of the pre-integration complex (PIC) which is composed of viral genome, matrix protein, Vpr and integrase. Homodimer; the homodimer further multimerizes as homohexamers or homopentamers. Interacts with human PPIA/CYPA; This interaction stabilizes the capsid. Interacts with human NUP153. Interacts with host PDZD8; this interaction stabilizes the capsid. Interacts with monkey TRIM5; this interaction destabilizes the capsid. In terms of assembly, homodimer, whose active site consists of two apposed aspartic acid residues. As to quaternary structure, heterodimer of p66 RT and p51 RT (RT p66/p51). Heterodimerization of RT is essential for DNA polymerase activity. The overall folding of the subdomains is similar in p66 RT and p51 RT but the spatial arrangements of the subdomains are dramatically different. Homotetramer; may further associate as a homohexadecamer. Part of the pre-integration complex (PIC) which is composed of viral genome, matrix protein, Vpr and integrase. Interacts with human SMARCB1/INI1 and human PSIP1/LEDGF isoform 1. Interacts with human KPNA3; this interaction might play a role in nuclear import of the pre-integration complex. Interacts with human NUP153; this interaction might play a role in nuclear import of the pre-integration complex. Mg(2+) is required as a cofactor. In terms of processing, specific enzymatic cleavages by the viral protease yield mature proteins. The protease is released by autocatalytic cleavage. The polyprotein is cleaved during and after budding, this process is termed maturation. Proteolytic cleavage of p66 RT removes the RNase H domain to yield the p51 RT subunit. Nucleocapsid protein p7 might be further cleaved after virus entry. Tyrosine phosphorylated presumably in the virion by a host kinase. Phosphorylation is apparently not a major regulator of membrane association. Post-translationally, phosphorylated possibly by host MAPK1; this phosphorylation is necessary for Pin1-mediated virion uncoating. In terms of processing, methylated by host PRMT6, impairing its function by reducing RNA annealing and the initiation of reverse transcription.

The protein localises to the host cell membrane. It is found in the host endosome. The protein resides in the host multivesicular body. Its subcellular location is the virion membrane. It localises to the host nucleus. The protein localises to the host cytoplasm. It is found in the virion. The catalysed reaction is Specific for a P1 residue that is hydrophobic, and P1' variable, but often Pro.. The enzyme catalyses Endohydrolysis of RNA in RNA/DNA hybrids. Three different cleavage modes: 1. sequence-specific internal cleavage of RNA. Human immunodeficiency virus type 1 and Moloney murine leukemia virus enzymes prefer to cleave the RNA strand one nucleotide away from the RNA-DNA junction. 2. RNA 5'-end directed cleavage 13-19 nucleotides from the RNA end. 3. DNA 3'-end directed cleavage 15-20 nucleotides away from the primer terminus.. It catalyses the reaction 3'-end directed exonucleolytic cleavage of viral RNA-DNA hybrid.. It carries out the reaction DNA(n) + a 2'-deoxyribonucleoside 5'-triphosphate = DNA(n+1) + diphosphate. Protease: The viral protease is inhibited by many synthetic protease inhibitors (PIs), such as amprenavir, atazanavir, indinavir, loprinavir, nelfinavir, ritonavir and saquinavir. Use of protease inhibitors in tritherapy regimens permit more ambitious therapeutic strategies. Reverse transcriptase/ribonuclease H: RT can be inhibited either by nucleoside RT inhibitors (NRTIs) or by non nucleoside RT inhibitors (NNRTIs). NRTIs act as chain terminators, whereas NNRTIs inhibit DNA polymerization by binding a small hydrophobic pocket near the RT active site and inducing an allosteric change in this region. Classical NRTIs are abacavir, adefovir (PMEA), didanosine (ddI), lamivudine (3TC), stavudine (d4T), tenofovir (PMPA), zalcitabine (ddC), and zidovudine (AZT). Classical NNRTIs are atevirdine (BHAP U-87201E), delavirdine, efavirenz (DMP-266), emivirine (I-EBU), and nevirapine (BI-RG-587). The tritherapies used as a basic effective treatment of AIDS associate two NRTIs and one NNRTI. Its function is as follows. Mediates, with Gag polyprotein, the essential events in virion assembly, including binding the plasma membrane, making the protein-protein interactions necessary to create spherical particles, recruiting the viral Env proteins, and packaging the genomic RNA via direct interactions with the RNA packaging sequence (Psi). Gag-Pol polyprotein may regulate its own translation, by the binding genomic RNA in the 5'-UTR. At low concentration, the polyprotein would promote translation, whereas at high concentration, the polyprotein would encapsidate genomic RNA and then shut off translation. In terms of biological role, targets the polyprotein to the plasma membrane via a multipartite membrane-binding signal, that includes its myristoylated N-terminus. Matrix protein is part of the pre-integration complex. Implicated in the release from host cell mediated by Vpu. Binds to RNA. Forms the conical core that encapsulates the genomic RNA-nucleocapsid complex in the virion. Most core are conical, with only 7% tubular. The core is constituted by capsid protein hexamer subunits. The core is disassembled soon after virion entry. Host restriction factors such as TRIM5-alpha or TRIMCyp bind retroviral capsids and cause premature capsid disassembly, leading to blocks in reverse transcription. Capsid restriction by TRIM5 is one of the factors which restricts HIV-1 to the human species. Host PIN1 apparently facilitates the virion uncoating. On the other hand, interactions with PDZD8 or CYPA stabilize the capsid. Functionally, encapsulates and protects viral dimeric unspliced genomic RNA (gRNA). Binds these RNAs through its zinc fingers. Acts as a nucleic acid chaperone which is involved in rearangement of nucleic acid secondary structure during gRNA retrotranscription. Also facilitates template switch leading to recombination. As part of the polyprotein, participates in gRNA dimerization, packaging, tRNA incorporation and virion assembly. Its function is as follows. Aspartyl protease that mediates proteolytic cleavages of Gag and Gag-Pol polyproteins during or shortly after the release of the virion from the plasma membrane. Cleavages take place as an ordered, step-wise cascade to yield mature proteins. This process is called maturation. Displays maximal activity during the budding process just prior to particle release from the cell. Also cleaves Nef and Vif, probably concomitantly with viral structural proteins on maturation of virus particles. Hydrolyzes host EIF4GI and PABP1 in order to shut off the capped cellular mRNA translation. The resulting inhibition of cellular protein synthesis serves to ensure maximal viral gene expression and to evade host immune response. Also mediates cleavage of host YTHDF3. Mediates cleavage of host CARD8, thereby activating the CARD8 inflammasome, leading to the clearance of latent HIV-1 in patient CD4(+) T-cells after viral reactivation; in contrast, HIV-1 can evade CARD8-sensing when its protease remains inactive in infected cells prior to viral budding. In terms of biological role, multifunctional enzyme that converts the viral RNA genome into dsDNA in the cytoplasm, shortly after virus entry into the cell. This enzyme displays a DNA polymerase activity that can copy either DNA or RNA templates, and a ribonuclease H (RNase H) activity that cleaves the RNA strand of RNA-DNA heteroduplexes in a partially processive 3' to 5' endonucleasic mode. Conversion of viral genomic RNA into dsDNA requires many steps. A tRNA(3)-Lys binds to the primer-binding site (PBS) situated at the 5'-end of the viral RNA. RT uses the 3' end of the tRNA primer to perform a short round of RNA-dependent minus-strand DNA synthesis. The reading proceeds through the U5 region and ends after the repeated (R) region which is present at both ends of viral RNA. The portion of the RNA-DNA heteroduplex is digested by the RNase H, resulting in a ssDNA product attached to the tRNA primer. This ssDNA/tRNA hybridizes with the identical R region situated at the 3' end of viral RNA. This template exchange, known as minus-strand DNA strong stop transfer, can be either intra- or intermolecular. RT uses the 3' end of this newly synthesized short ssDNA to perform the RNA-dependent minus-strand DNA synthesis of the whole template. RNase H digests the RNA template except for two polypurine tracts (PPTs) situated at the 5'-end and near the center of the genome. It is not clear if both polymerase and RNase H activities are simultaneous. RNase H probably can proceed both in a polymerase-dependent (RNA cut into small fragments by the same RT performing DNA synthesis) and a polymerase-independent mode (cleavage of remaining RNA fragments by free RTs). Secondly, RT performs DNA-directed plus-strand DNA synthesis using the PPTs that have not been removed by RNase H as primers. PPTs and tRNA primers are then removed by RNase H. The 3' and 5' ssDNA PBS regions hybridize to form a circular dsDNA intermediate. Strand displacement synthesis by RT to the PBS and PPT ends produces a blunt ended, linear dsDNA copy of the viral genome that includes long terminal repeats (LTRs) at both ends. Catalyzes viral DNA integration into the host chromosome, by performing a series of DNA cutting and joining reactions. This enzyme activity takes place after virion entry into a cell and reverse transcription of the RNA genome in dsDNA. The first step in the integration process is 3' processing. This step requires a complex comprising the viral genome, matrix protein, Vpr and integrase. This complex is called the pre-integration complex (PIC). The integrase protein removes 2 nucleotides from each 3' end of the viral DNA, leaving recessed CA OH's at the 3' ends. In the second step, the PIC enters cell nucleus. This process is mediated through integrase and Vpr proteins, and allows the virus to infect a non dividing cell. This ability to enter the nucleus is specific of lentiviruses, other retroviruses cannot and rely on cell division to access cell chromosomes. In the third step, termed strand transfer, the integrase protein joins the previously processed 3' ends to the 5' ends of strands of target cellular DNA at the site of integration. The 5'-ends are produced by integrase-catalyzed staggered cuts, 5 bp apart. A Y-shaped, gapped, recombination intermediate results, with the 5'-ends of the viral DNA strands and the 3' ends of target DNA strands remaining unjoined, flanking a gap of 5 bp. The last step is viral DNA integration into host chromosome. This involves host DNA repair synthesis in which the 5 bp gaps between the unjoined strands are filled in and then ligated. Since this process occurs at both cuts flanking the HIV genome, a 5 bp duplication of host DNA is produced at the ends of HIV-1 integration. Alternatively, Integrase may catalyze the excision of viral DNA just after strand transfer, this is termed disintegration. In Homo sapiens (Human), this protein is Gag-Pol polyprotein (gag-pol).